Reading from the N-terminus, the 330-residue chain is Sulfate/thiosulfate import ATP-binding protein CysA (330 aa).

The ABC transporter domain occupies 3–237 (IEIRNINKQF…PASEFVYHFL (235 aa)). Residue 35–42 (GPSGCGKT) coordinates ATP.

Belongs to the ABC transporter superfamily. Sulfate/tungstate importer (TC 3.A.1.6) family. In terms of assembly, the complex is composed of two ATP-binding proteins (CysA), two transmembrane proteins (CysT and CysW) and a solute-binding protein (CysP).

Its subcellular location is the cell inner membrane. The enzyme catalyses sulfate(out) + ATP + H2O = sulfate(in) + ADP + phosphate + H(+). It carries out the reaction thiosulfate(out) + ATP + H2O = thiosulfate(in) + ADP + phosphate + H(+). Functionally, part of the ABC transporter complex CysAWTP involved in sulfate/thiosulfate import. Responsible for energy coupling to the transport system. The sequence is that of Sulfate/thiosulfate import ATP-binding protein CysA from Pectobacterium atrosepticum (strain SCRI 1043 / ATCC BAA-672) (Erwinia carotovora subsp. atroseptica).